The chain runs to 347 residues: Acetylglutamate kinase, chloroplastic (347 aa).

The transit peptide at Met-1–Ala-50 directs the protein to the chloroplast. At Thr-51 the chain carries N-acetylthreonine. Gly-94–Ala-95 serves as a coordination point for ATP. Residues Gly-126, Arg-148, and Asn-242–Ala-245 each bind N-acetyl-L-glutamate. Lys-260 is an L-arginine binding site. ATP contacts are provided by residues Thr-265–Asp-266 and Leu-271. Lys-282 serves as a coordination point for L-arginine. Lys-297 to Lys-305 is a binding site for ATP. L-arginine is bound by residues Glu-334 to Ser-337 and Gly-342.

The protein belongs to the acetylglutamate kinase family. ArgB subfamily. Interacts with GLB1. Interaction is dependent of MgATP and inhibited by 2-oxoglutarate, arginine, glutamate, citrate, and oxaloacetate.

Its subcellular location is the plastid. The protein localises to the chloroplast stroma. The enzyme catalyses N-acetyl-L-glutamate + ATP = N-acetyl-L-glutamyl 5-phosphate + ADP. It participates in amino-acid biosynthesis; L-arginine biosynthesis; N(2)-acetyl-L-ornithine from L-glutamate: step 2/4. With respect to regulation, inhibited by arginine. Inhibition is relieved by binding to GLB1. Functionally, involved in the arginine biosynthetic pathway via the intermediate compound ornithine. This Arabidopsis thaliana (Mouse-ear cress) protein is Acetylglutamate kinase, chloroplastic.